Reading from the N-terminus, the 298-residue chain is uncharacterized protein (298 aa).

Positions 2–229 (LTIDHVTKTF…FGKKNVTIHS (228 aa)) constitute an ABC transporter domain. 34 to 41 (GANGAGKT) contributes to the ATP binding site.

Belongs to the ABC transporter superfamily.

It is found in the cell membrane. This is an uncharacterized protein from Bacillus subtilis (strain 168).